The primary structure comprises 594 residues: Zinc finger protein 467 (594 aa).

Residues 1–86 form a disordered region; the sequence is MRETLEALNS…PQKAEPAGSV (86 aa). Positions 1-183 are interaction with STAT3; sequence MRETLEALNS…TLRLHQRLHR (183 aa). Polar residues predominate over residues 31 to 47; sequence SNAQEKMSSRGESTLHS. A compositionally biased stretch (basic and acidic residues) spans 54-64; the sequence is PGQKEGIHTEQ. Lys97 is covalently cross-linked (Glycyl lysine isopeptide (Lys-Gly) (interchain with G-Cter in SUMO2)). 12 C2H2-type zinc fingers span residues 160 to 182, 188 to 210, 216 to 238, 244 to 266, 272 to 294, 300 to 322, 355 to 377, 430 to 452, 458 to 480, 486 to 508, 514 to 536, and 542 to 564; these read YGCE…QRLH, CACP…QRSH, FPCS…LRTH, YPCA…QKTH, FPCT…QRIH, YQCT…QRVH, FACS…QSLH, FFCP…RRVH, FACA…SRAH, FACA…QAVH, HACA…QAIH, and FSCP…QRIH. The disordered stretch occupies residues 313 to 351; it reads QHLVRHQRVHDAASRTRSSPDIPVAPHSPTASLTPSPPG. Lys368 participates in a covalent cross-link: Glycyl lysine isopeptide (Lys-Gly) (interchain with G-Cter in SUMO2).

This sequence belongs to the krueppel C2H2-type zinc-finger protein family. In terms of assembly, interacts with STAT3. Enhances STAT3 activity by keeping it in the nucleus.

It is found in the nucleus. Functionally, transcription factor that promotes adipocyte differentiation and suppresses osteoblast differentiation in the bone marrow. Enhances the osteoclast-supporting ability of stromal cells. Binds with STAT3 the consensus sequence 5'-CTTCTGGGAAGA-3' of the acute phase response element (APRE). Transactivates several promoters including FOS, OSM and PPARG. Recruits a histone deacetylase complex. This is Zinc finger protein 467 (Znf467) from Mus musculus (Mouse).